A 3133-amino-acid chain; its full sequence is Hemocytin (3133 aa).

A TIL 1 domain is found at 40-96 (CTGGQQYTVCADSCLRKCSDTALAASGQCKPVCVEGCACSPSQLLDDNGVCVPVAKC). N-linked (GlcNAc...) asparagine glycosylation is present at N151. Residues 153–209 (TAQNMEFTTCETSEPLTCKNMHLPPSTQTAECRPGCQCKKGQVLDTASKRCVPATQC) form the TIL 2 domain. A glycan (N-linked (GlcNAc...) asparagine) is linked at N237. The 172-residue stretch at 247–418 (GVCGAWGDSH…DSWKLKPTCP (172 aa)) folds into the VWFD 1 domain. 3 disulfides stabilise this stretch: C249-C380, C271-C417, and C295-C302. In terms of domain architecture, TIL 3 spans 509–576 (CDEVCSNYDS…TTECVPRAKC (68 aa)). N-linked (GlcNAc...) asparagine glycosylation occurs at N564. Residues 661–680 (PDGQSVESEPLPKPNELQIG) are disordered. One can recognise a TIL 4 domain in the interval 770–837 (CPPGEVYQAC…ERTCVPVKDC (68 aa)). Residues 899-924 (STTTTTTTSTTTTTTTPEPTETTTET) form a disordered region. Disulfide bonds link C940-C1095 and C1116-C1254. 2 consecutive F5/8 type C domains span residues 940-1095 (CSPD…IIGC) and 1116-1254 (CTEP…PIGC). N-linked (GlcNAc...) asparagine glycosylation is found at N1170, N1387, N1622, N1727, and N1847. The 176-residue stretch at 1619–1794 (VFCNMTGRTF…KPGVPADACA (176 aa)) folds into the VWFD 2 domain. 2 cysteine pairs are disulfide-bonded: C1621-C1754 and C1641-C1793. Residues 1890-1948 (CPPPLVHYDCYRKRCEETCAPYPNAARACPAQEGQCSPGCYCPDGKLRKGDQCVLPADC) form the TIL 5 domain. The VWFD 3 domain maps to 1951-2136 (CTCTGVGTPA…WQASPEKLTE (186 aa)). Disulfide bonds link C1953–C2099 and C2001–C2009. Residues N1975 and N1985 are each glycosylated (N-linked (GlcNAc...) asparagine). N2093, N2113, N2161, N2276, and N2451 each carry an N-linked (GlcNAc...) asparagine glycan. One can recognise a TIL 6 domain in the interval 2229–2285 (CEEPFVYRACVDCERTCDNYEQLQTSPEKCTNKPVEGCFCPEGKVRVNNTCIEPGKC). The VWFC 1 domain occupies 2553-2622 (VACRHQDNVY…DSGQCCGKCE (70 aa)). N-linked (GlcNAc...) asparagine glycosylation is found at N2647, N2654, N2663, N2794, N2810, N2865, N2929, N2964, and N3028. The VWFC 2 domain maps to 2842–2907 (VACRDGDKIY…AADHCCGRCV (66 aa)). Disulfide bonds link C2971-C3040, C2991-C3054, C3004-C3070, and C3020-C3072. Positions 2971 to 3076 (CNEKPQALSK…PARCHCAACG (106 aa)) constitute a CTCK domain.

Post-translationally, may be converted into the 260 kDa mature hemocytin by proteolysis.

Adhesive protein and relates to hemostasis or encapsulation of foreign substances for self-defense. The protein is Hemocytin of Bombyx mori (Silk moth).